The chain runs to 295 residues: MEEIEIIHKPVMLKEVIHYLKLSPGKIVVDATLGLGGHSSEILRELKGEGLLIGIDRDEEVLNLARERLRKIANNFVLFNTTYDKVQEILKELKLSFIDAILFDLGFSSFHIEKSERGFSFMRPEEPLDMRYSKDTTLTAADILNSFNELELSNLFWEYGEEPLSRKLAKKIVERRKEKKFVYVKDLLEVVEEVIPKRKRHEATKVFQALRIVVNDEVNILKRALDQIPFILAPRGRIVVLTYHSIEDRVVKNFFKSHSDKIFPVNKKVIRPSVNEIRENRRARSAKLRVGERRE.

Residues G36 to H38, D56, L90, D104, and H111 each bind S-adenosyl-L-methionine.

It belongs to the methyltransferase superfamily. RsmH family.

It is found in the cytoplasm. The catalysed reaction is cytidine(1402) in 16S rRNA + S-adenosyl-L-methionine = N(4)-methylcytidine(1402) in 16S rRNA + S-adenosyl-L-homocysteine + H(+). In terms of biological role, specifically methylates the N4 position of cytidine in position 1402 (C1402) of 16S rRNA. The chain is Ribosomal RNA small subunit methyltransferase H from Dictyoglomus turgidum (strain DSM 6724 / Z-1310).